Reading from the N-terminus, the 349-residue chain is UDP-N-acetylenolpyruvoylglucosamine reductase (349 aa).

Residues 24 to 197 enclose the FAD-binding PCMH-type domain; it reads FGIDATARFA…VAVTFRLPKR (174 aa). Residue arginine 173 is part of the active site. Serine 249 acts as the Proton donor in catalysis. The active site involves glutamate 345.

It belongs to the MurB family. Requires FAD as cofactor.

The protein resides in the cytoplasm. The enzyme catalyses UDP-N-acetyl-alpha-D-muramate + NADP(+) = UDP-N-acetyl-3-O-(1-carboxyvinyl)-alpha-D-glucosamine + NADPH + H(+). The protein operates within cell wall biogenesis; peptidoglycan biosynthesis. Its function is as follows. Cell wall formation. The chain is UDP-N-acetylenolpyruvoylglucosamine reductase from Burkholderia ambifaria (strain MC40-6).